The chain runs to 352 residues: Inorganic triphosphatase (352 aa).

Residues 6–203 (LQEIELKLAI…KRGYLLGSKQ (198 aa)) enclose the CYTH domain.

The enzyme catalyses triphosphate + H2O = phosphate + diphosphate. Involved in the hydrolysis of the beta-gamma-phosphoanhydride linkage of triphosphate-containing substrates (inorganic or nucleoside-linked). Catalyzes the hydrolysis of inorganic triphosphate (PPPi), which could be cytotoxic because of its high affinity for calcium ion, thereby interfering with calcium signaling. The polypeptide is Inorganic triphosphatase (Haemophilus influenzae (strain ATCC 51907 / DSM 11121 / KW20 / Rd)).